Reading from the N-terminus, the 298-residue chain is Protoheme IX farnesyltransferase (298 aa).

9 consecutive transmembrane segments (helical) span residues 26–46, 52–72, 98–118, 120–140, 148–168, 174–194, 214–234, 241–261, and 278–298; these read VVGHIVFTAIIGMFLAVPGVP, FWASLGIGFAAASAAALNHFL, VVGFALVLGIVAMAILIAFVN, LTAFLTFLSLIGYAVIYTVYL, IVIGGAAGAAPPVLGWCAVTG, ALLLFLLIFVWTPPHFWAYAI, IAFTQLHILLYTILLFLAGLM, SGEIYLAAALIFGGIFVYYAI, and YSLVYLVGIFSALLVDHYIVL.

It belongs to the UbiA prenyltransferase family. Protoheme IX farnesyltransferase subfamily.

It is found in the cell inner membrane. The enzyme catalyses heme b + (2E,6E)-farnesyl diphosphate + H2O = Fe(II)-heme o + diphosphate. The protein operates within porphyrin-containing compound metabolism; heme O biosynthesis; heme O from protoheme: step 1/1. Converts heme B (protoheme IX) to heme O by substitution of the vinyl group on carbon 2 of heme B porphyrin ring with a hydroxyethyl farnesyl side group. In Methylococcus capsulatus (strain ATCC 33009 / NCIMB 11132 / Bath), this protein is Protoheme IX farnesyltransferase.